Here is a 111-residue protein sequence, read N- to C-terminus: Large ribosomal subunit protein uL24 (111 aa).

It belongs to the universal ribosomal protein uL24 family. In terms of assembly, part of the 50S ribosomal subunit.

One of two assembly initiator proteins, it binds directly to the 5'-end of the 23S rRNA, where it nucleates assembly of the 50S subunit. Functionally, one of the proteins that surrounds the polypeptide exit tunnel on the outside of the subunit. The protein is Large ribosomal subunit protein uL24 of Myxococcus xanthus (strain DK1622).